Reading from the N-terminus, the 359-residue chain is Probable deacetylase AF_0130 (359 aa).

His126 serves as the catalytic Proton donor/acceptor. The Zn(2+) site is built by Asp162, His164, and Asp249.

This sequence belongs to the histone deacetylase family. It depends on Zn(2+) as a cofactor.

In terms of biological role, probable deacetylase. In Archaeoglobus fulgidus (strain ATCC 49558 / DSM 4304 / JCM 9628 / NBRC 100126 / VC-16), this protein is Probable deacetylase AF_0130.